The following is a 464-amino-acid chain: Plant intracellular Ras-group-related LRR protein 3 (464 aa).

Residues 106 to 138 (AAVVSLEEVHEGYEKQLRDLEEEIGRVYASAVE) adopt a coiled-coil conformation. LRR repeat units lie at residues 160 to 183 (GGVV…LGKI), 184 to 206 (VGLV…ISGL), 207 to 230 (EKLE…GLLL), 232 to 252 (LRIL…IAQC), 254 to 275 (SLVE…FGYG), 276 to 299 (LLNL…ICEM), 301 to 322 (SLRY…IGRL), 323 to 347 (TNLE…ISDL), 348 to 370 (ANLR…FFRL), and 372 to 393 (KLEK…MVNQ). The short motif at 398–406 (VREFMRKRW) is the GVYW; degenerate element.

It belongs to the SHOC2 family. Widely expressed.

Functionally, leucine-rich repeat protein that likely mediates protein interactions, possibly in the context of signal transduction. The polypeptide is Plant intracellular Ras-group-related LRR protein 3 (PIRL3) (Arabidopsis thaliana (Mouse-ear cress)).